We begin with the raw amino-acid sequence, 186 residues long: dCTP deaminase (186 aa).

107-112 (KSTYAR) contacts dCTP. Residue Glu133 is the Proton donor/acceptor of the active site. 3 residues coordinate dCTP: Gln152, Tyr166, and Gln176.

It belongs to the dCTP deaminase family. In terms of assembly, homotrimer.

The enzyme catalyses dCTP + H2O + H(+) = dUTP + NH4(+). It participates in pyrimidine metabolism; dUMP biosynthesis; dUMP from dCTP (dUTP route): step 1/2. Catalyzes the deamination of dCTP to dUTP. This chain is dCTP deaminase, found in Campylobacter jejuni subsp. jejuni serotype O:6 (strain 81116 / NCTC 11828).